A 786-amino-acid polypeptide reads, in one-letter code: LPS-assembly protein LptD (786 aa).

Positions 1–24 (MKKRIPTLLATMIASALYSHQGLA) are cleaved as a signal peptide. Intrachain disulfides connect C31-C726 and C173-C727.

Belongs to the LptD family. Component of the lipopolysaccharide transport and assembly complex. Interacts with LptE and LptA. Post-translationally, contains two intramolecular disulfide bonds.

It localises to the cell outer membrane. Together with LptE, is involved in the assembly of lipopolysaccharide (LPS) at the surface of the outer membrane. This is LPS-assembly protein LptD from Salmonella typhimurium (strain LT2 / SGSC1412 / ATCC 700720).